Here is a 923-residue protein sequence, read N- to C-terminus: Protein dct-6 (923 aa).

Residues D312 to Q347 adopt a coiled-coil conformation.

Functionally, may have a role in tumor suppression. The protein is Protein dct-6 (dct-6) of Caenorhabditis elegans.